We begin with the raw amino-acid sequence, 309 residues long: NADH-cytochrome b5 reductase 1 (309 aa).

The helical transmembrane segment at 31–51 (DWVVYSVALALALGTWKFFQL) threads the bilayer. Positions 60–168 (TKFQEFELKE…RGPKGAFVYQ (109 aa)) constitute an FAD-binding FR-type domain. FAD is bound by residues 148–163 (AGLSVGQSIRVRGPKG) and 174–208 (HFGMIAGGTGITPMLQVVRAIVRGRAAGDTTQVDL).

The protein belongs to the flavoprotein pyridine nucleotide cytochrome reductase family. As to quaternary structure, monomer. Component of the 2-(3-amino-3-carboxypropyl)histidine synthase complex composed of DPH1, DPH2, DPH3 and a NADH-dependent reductase, predominantly CBR1. FAD is required as a cofactor.

Its subcellular location is the mitochondrion outer membrane. It carries out the reaction 2 Fe(III)-[cytochrome b5] + NADH = 2 Fe(II)-[cytochrome b5] + NAD(+) + H(+). It catalyses the reaction 2 Fe(3+)-[Dph3] + NADH = 2 Fe(2+)-[Dph3] + NAD(+) + H(+). It functions in the pathway protein modification; peptidyl-diphthamide biosynthesis. NADH-dependent reductase for DPH3 and cytochrome b5. Required for the first step of diphthamide biosynthesis, a post-translational modification of histidine which occurs in elongation factor 2. DPH1 and DPH2 transfer a 3-amino-3-carboxypropyl (ACP) group from S-adenosyl-L-methionine (SAM) to a histidine residue, the reaction is assisted by a reduction system comprising DPH3 and a NADH-dependent reductase, predominantly CBR1. By reducing DPH3, also involved in the formation of the tRNA wobble base modification mcm5s 2U (5-methoxycarbonylmethyl-2-thiouridine), mediated by the elongator complex. The cytochrome b5/NADH cytochrome b5 reductase electron transfer system supports the catalytic activity of several sterol biosynthetic enzymes. The protein is NADH-cytochrome b5 reductase 1 (CBR1) of Pyricularia oryzae (strain 70-15 / ATCC MYA-4617 / FGSC 8958) (Rice blast fungus).